The chain runs to 408 residues: MGLRRGPCPAALLPGGFLFLLLLADPALLAGRRPPVVLVPGDLGNQLEAKLDKPTVVHYLCSKRTESYFTLWLNLELLLPVIIDCWIDNIRLVYNRTSRATQFPDGVDVRVPGFGKTFSLEFLDPSKSSVGSYFHTMVESLVDWGYIRGEDVRGAPYDWRRAPNENGPYFLALREMIEEMYQLYGGPVVLVAHSMGNMYTLYFLQRQPQAWKNKYIQAFVALGAPWGGVAKTLRVLASGDNNRIPVIRPLKIREQQRSAVSTSWLLPYNYTWSPEKIFVHTPTANYTLRDYHQFFQDIGFKDGWLMRQDTEGLVEAMVPPGVPLHCLYGTGVPTPDSFYYESFPDRDPKICFGDGDGTVNLQSALQCQAWRGHQEHQVSLQALPGSEHIEMLANATTLAYLKRVLLGP.

The signal sequence occupies residues 1 to 31 (MGLRRGPCPAALLPGGFLFLLLLADPALLAG). Residue D42 participates in substrate binding. A disulfide bridge links C61 with C85. A glycan (N-linked (GlcNAc...) asparagine) is linked at N95. The active-site Acyl-ester intermediate is the S194. Residue S194 participates in Zn(2+) binding. Substrate is bound at residue M195. N-linked (GlcNAc...) asparagine glycosylation is found at N269 and N285. Residues D336 and C351 each contribute to the Zn(2+) site. Residues D356 and H388 each act as charge relay system in the active site. H388 lines the Zn(2+) pocket. An N-linked (GlcNAc...) asparagine glycan is attached at N394.

The protein belongs to the AB hydrolase superfamily. Lipase family. Post-translationally, N-glycosylated. N-glycosylation is important for maturation of the enzyme and normal subcellular location.

It is found in the secreted. The protein localises to the lysosome. It localises to the membrane. The enzyme catalyses a 1,2-diacyl-sn-glycero-3-phosphocholine + H2O = a 2-acyl-sn-glycero-3-phosphocholine + a fatty acid + H(+). It catalyses the reaction 1-hexadecanoyl-2-(9Z-octadecenoyl)-sn-glycero-3-phosphocholine + H2O = 2-(9Z-octadecenoyl)-sn-glycero-3-phosphocholine + hexadecanoate + H(+). The catalysed reaction is 1,2-di-(9Z-octadecenoyl)-sn-glycero-3-phosphocholine + H2O = 2-(9Z-octadecenoyl)-sn-glycero-3-phosphocholine + (9Z)-octadecenoate + H(+). It carries out the reaction 1-hexadecanoyl-2-glutaroyl-sn-glycero-3-phosphocholine + H2O = 2-glutaroyl-sn-glycero-3-phosphocholine + hexadecanoate + H(+). The enzyme catalyses 1-hexadecanoyl-2-nonadioyl-sn-glycero-3-phosphocholine + H2O = 2-nonadioyl-sn-glycero-3-phosphocholine + hexadecanoate + H(+). It catalyses the reaction 1-hexadecanoyl-2-(5-oxopentanoyl)-sn-glycero-3-phosphocholine + H2O = 2-(5-oxopentanoyl)-sn-glycero-3-phosphocholine + hexadecanoate + H(+). The catalysed reaction is 1-hexadecanoyl-2-(9-oxononanoyl)-sn-glycero-3-phosphocholine + H2O = 2-(9-oxononanoyl)-sn-glycero-3-phosphocholine + hexadecanoate + H(+). It carries out the reaction 1,2-dihexadecanoyl-sn-glycero-3-phosphocholine + H2O = 2-hexadecanoyl-sn-glycero-3-phosphocholine + hexadecanoate + H(+). The enzyme catalyses a 1,2-diacyl-sn-glycero-3-phosphocholine + H2O = a 1-acyl-sn-glycero-3-phosphocholine + a fatty acid + H(+). It catalyses the reaction 1-hexadecanoyl-2-(9Z-octadecenoyl)-sn-glycero-3-phosphocholine + H2O = 1-hexadecanoyl-sn-glycero-3-phosphocholine + (9Z)-octadecenoate + H(+). The catalysed reaction is 1,2-di-(9Z-octadecenoyl)-sn-glycero-3-phosphocholine + H2O = 1-(9Z-octadecenoyl)-sn-glycero-3-phosphocholine + (9Z)-octadecenoate + H(+). It carries out the reaction 1,2-dihexadecanoyl-sn-glycero-3-phosphocholine + H2O = 1-hexadecanoyl-sn-glycero-3-phosphocholine + hexadecanoate + H(+). The enzyme catalyses a 1-acyl-sn-glycero-3-phosphocholine + H2O = sn-glycerol 3-phosphocholine + a fatty acid + H(+). It catalyses the reaction 1-hexadecanoyl-sn-glycero-3-phosphocholine + H2O = sn-glycerol 3-phosphocholine + hexadecanoate + H(+). The catalysed reaction is N-(acetyl)-sphing-4-enine + a 1,2-diacyl-sn-glycero-3-phosphoethanolamine = 1-O-acyl-N-(acetyl)-sphing-4-enine + a 2-acyl-sn-glycero-3-phosphoethanolamine. It carries out the reaction 1-hexadecanoyl-2-(9Z-octadecenoyl)-sn-glycero-3-phosphoethanolamine + N-(acetyl)-sphing-4-enine = 2-(9Z-octadecenoyl)-sn-glycero-3-phosphoethanolamine + 1-hexadecanoyl-N-(acetyl)-sphing-4-enine. The enzyme catalyses 1-hexadecanoyl-2-(9Z,12Z-octadecadienoyl)-sn-glycero-3-phosphoethanolamine + N-(acetyl)-sphing-4-enine = 2-(9Z,12Z)-octadecadienoyl-sn-glycero-3-phosphoethanolamine + 1-hexadecanoyl-N-(acetyl)-sphing-4-enine. It catalyses the reaction 1-hexadecanoyl-2-(5Z,8Z,11Z,14Z-eicosatetraenoyl)-sn-glycero-3-phosphoethanolamine + N-(acetyl)-sphing-4-enine = 2-(5Z,8Z,11Z,14Z)-eicosatetraenoyl-sn-glycero-3-phosphoethanolamine + 1-hexadecanoyl-N-(acetyl)-sphing-4-enine. The catalysed reaction is N-(acetyl)-sphing-4-enine + a 1,2-diacyl-sn-glycero-3-phosphoethanolamine = 1-O-acyl-N-(acetyl)-sphing-4-enine + a 1-acyl-sn-glycero-3-phosphoethanolamine. It carries out the reaction 1-hexadecanoyl-2-(9Z-octadecenoyl)-sn-glycero-3-phosphoethanolamine + N-(acetyl)-sphing-4-enine = 1-(9Z-octadecenoyl)-N-(acetyl)-sphing-4-enine + 1-hexadecanoyl-sn-glycero-3-phosphoethanolamine. The enzyme catalyses 1-hexadecanoyl-2-(9Z,12Z-octadecadienoyl)-sn-glycero-3-phosphoethanolamine + N-(acetyl)-sphing-4-enine = 1-(9Z,12Z-octadecadienoyl)-N-acetylsphing-4-enine + 1-hexadecanoyl-sn-glycero-3-phosphoethanolamine. It catalyses the reaction 1-hexadecanoyl-2-(5Z,8Z,11Z,14Z-eicosatetraenoyl)-sn-glycero-3-phosphoethanolamine + N-(acetyl)-sphing-4-enine = 1-(5Z,8Z,11Z,14Z)-eicosatetraenoyl-N-(acetyl)-sphing-4-enine + 1-hexadecanoyl-sn-glycero-3-phosphoethanolamine. The catalysed reaction is N-(acetyl)-sphing-4-enine + a 1,2-diacyl-sn-glycero-3-phosphocholine = 1-O-acyl-N-(acetyl)-sphing-4-enine + a 2-acyl-sn-glycero-3-phosphocholine. It carries out the reaction 1-hexadecanoyl-2-(9Z-octadecenoyl)-sn-glycero-3-phosphocholine + N-(acetyl)-sphing-4-enine = 1-hexadecanoyl-N-(acetyl)-sphing-4-enine + 2-(9Z-octadecenoyl)-sn-glycero-3-phosphocholine. The enzyme catalyses 1-hexadecanoyl-2-(9Z,12Z-octadecadienoyl)-sn-glycero-3-phosphocholine + N-(acetyl)-sphing-4-enine = 2-(9Z,12Z-octadecadienoyl)-sn-glycero-3-phosphocholine + 1-hexadecanoyl-N-(acetyl)-sphing-4-enine. It catalyses the reaction 1-hexadecanoyl-2-(5Z,8Z,11Z,14Z-eicosatetraenoyl)-sn-glycero-3-phosphocholine + N-(acetyl)-sphing-4-enine = 1-hexadecanoyl-N-(acetyl)-sphing-4-enine + 2-(5Z,8Z,11Z,14Z)-eicosatetraenoyl-sn-glycero-3-phosphocholine. The catalysed reaction is 1-hexadecanoyl-2-(4Z,7Z,10Z,13Z,16Z,19Z-docosahexaenoyl)-sn-glycero-3-phosphocholine + N-(acetyl)-sphing-4-enine = 2-(4Z,7Z,10Z,13Z,16Z,19Z-docosahexaenoyl)-sn-glycero-3-phosphocholine + 1-hexadecanoyl-N-(acetyl)-sphing-4-enine. It carries out the reaction 1-hexadecanoyl-2-nonadioyl-sn-glycero-3-phosphocholine + N-(acetyl)-sphing-4-enine = 2-nonadioyl-sn-glycero-3-phosphocholine + 1-hexadecanoyl-N-(acetyl)-sphing-4-enine. The enzyme catalyses 1-octadecanoyl-2-(9Z-octadecenoyl)-sn-glycero-3-phosphocholine + N-(acetyl)-sphing-4-enine = 1-octadecanoyl-N-(acetyl)-sphing-4-enine + 2-(9Z-octadecenoyl)-sn-glycero-3-phosphocholine. It catalyses the reaction 1-(9Z)-octadecenoyl-2-octadecanoyl-sn-glycero-3-phosphocholine + N-(acetyl)-sphing-4-enine = 2-octadecanoyl-sn-glycero-3-phosphocholine + 1-(9Z-octadecenoyl)-N-(acetyl)-sphing-4-enine. The catalysed reaction is 1-octadecanoyl-2-(5Z,8Z,11Z,14Z-eicosatetraenoyl)-sn-glycero-3-phosphocholine + N-(acetyl)-sphing-4-enine = 1-octadecanoyl-N-(acetyl)-sphing-4-enine + 2-(5Z,8Z,11Z,14Z)-eicosatetraenoyl-sn-glycero-3-phosphocholine. It carries out the reaction 1-(9Z-octadecenoyl)-2-hexadecanoyl-sn-glycero-3-phosphocholine + N-(acetyl)-sphing-4-enine = 1-(9Z-octadecenoyl)-N-(acetyl)-sphing-4-enine + 2-hexadecanoyl-sn-glycero-3-phosphocholine. The enzyme catalyses N-(acetyl)-sphing-4-enine + a 1,2-diacyl-sn-glycero-3-phosphocholine = 1-O-acyl-N-(acetyl)-sphing-4-enine + a 1-acyl-sn-glycero-3-phosphocholine. It catalyses the reaction 1-hexadecanoyl-2-(9Z-octadecenoyl)-sn-glycero-3-phosphocholine + N-(acetyl)-sphing-4-enine = 1-(9Z-octadecenoyl)-N-(acetyl)-sphing-4-enine + 1-hexadecanoyl-sn-glycero-3-phosphocholine. The catalysed reaction is 1-hexadecanoyl-2-(9Z,12Z-octadecadienoyl)-sn-glycero-3-phosphocholine + N-(acetyl)-sphing-4-enine = 1-(9Z,12Z-octadecadienoyl)-N-acetylsphing-4-enine + 1-hexadecanoyl-sn-glycero-3-phosphocholine. It carries out the reaction 1-hexadecanoyl-2-(5Z,8Z,11Z,14Z-eicosatetraenoyl)-sn-glycero-3-phosphocholine + N-(acetyl)-sphing-4-enine = 1-(5Z,8Z,11Z,14Z)-eicosatetraenoyl-N-(acetyl)-sphing-4-enine + 1-hexadecanoyl-sn-glycero-3-phosphocholine. The enzyme catalyses 1-hexadecanoyl-2-(4Z,7Z,10Z,13Z,16Z,19Z-docosahexaenoyl)-sn-glycero-3-phosphocholine + N-(acetyl)-sphing-4-enine = 1-(4Z,7Z,10Z,13Z,16Z,19Z-docosahexaenoyl)-N-(acetyl)-sphing-4-enine + 1-hexadecanoyl-sn-glycero-3-phosphocholine. It catalyses the reaction 1-octadecanoyl-2-(9Z-octadecenoyl)-sn-glycero-3-phosphocholine + N-(acetyl)-sphing-4-enine = 1-(9Z-octadecenoyl)-N-(acetyl)-sphing-4-enine + 1-octadecanoyl-sn-glycero-3-phosphocholine. The catalysed reaction is 1-octadecanoyl-2-(9Z,12Z)-octadecadienoyl-sn-glycero-3-phosphocholine + N-(acetyl)-sphing-4-enine = 1-(9Z,12Z-octadecadienoyl)-N-acetylsphing-4-enine + 1-octadecanoyl-sn-glycero-3-phosphocholine. It carries out the reaction 1-(9Z-octadecenoyl)-2-hexadecanoyl-sn-glycero-3-phosphocholine + N-(acetyl)-sphing-4-enine = 1-hexadecanoyl-N-(acetyl)-sphing-4-enine + 1-(9Z-octadecenoyl)-sn-glycero-3-phosphocholine. The enzyme catalyses 1-(9Z)-octadecenoyl-2-octadecanoyl-sn-glycero-3-phosphocholine + N-(acetyl)-sphing-4-enine = 1-octadecanoyl-N-(acetyl)-sphing-4-enine + 1-(9Z-octadecenoyl)-sn-glycero-3-phosphocholine. It catalyses the reaction 1,2-di-(9Z-octadecenoyl)-sn-glycero-3-phosphocholine + N-(acetyl)-sphing-4-enine = 1-(9Z-octadecenoyl)-N-(acetyl)-sphing-4-enine + 1-(9Z-octadecenoyl)-sn-glycero-3-phosphocholine. The catalysed reaction is 1-octadecanoyl-2-(5Z,8Z,11Z,14Z-eicosatetraenoyl)-sn-glycero-3-phosphocholine + N-(acetyl)-sphing-4-enine = 1-(5Z,8Z,11Z,14Z)-eicosatetraenoyl-N-(acetyl)-sphing-4-enine + 1-octadecanoyl-sn-glycero-3-phosphocholine. It carries out the reaction a 1,2-diacyl-sn-glycero-3-phospho-L-serine + N-(acetyl)-sphing-4-enine = a 2-acyl-sn-glycero-3-phospho-L-serine + 1-O-acyl-N-(acetyl)-sphing-4-enine. The enzyme catalyses 1-octadecanoyl-2-(9Z-octadecenoyl)-sn-glycero-3-phospho-L-serine + N-(acetyl)-sphing-4-enine = 2-(9Z-octadecenoyl)-sn-glycero-3-phospho-L-serine + 1-octadecanoyl-N-(acetyl)-sphing-4-enine. It catalyses the reaction a 1,2-diacyl-sn-glycero-3-phospho-L-serine + N-(acetyl)-sphing-4-enine = 1-O-acyl-N-(acetyl)-sphing-4-enine + a 1-acyl-sn-glycero-3-phospho-L-serine. The catalysed reaction is 1-octadecanoyl-2-(9Z-octadecenoyl)-sn-glycero-3-phospho-L-serine + N-(acetyl)-sphing-4-enine = 1-octadecanoyl-sn-glycero-3-phosphoserine + 1-(9Z-octadecenoyl)-N-(acetyl)-sphing-4-enine. It carries out the reaction a 1,2-diacyl-sn-glycero-3-phospho-(1'-sn-glycerol) + N-(acetyl)-sphing-4-enine = 2-acyl-sn-glycero-3-phospho-(1'-sn-glycerol) + 1-O-acyl-N-(acetyl)-sphing-4-enine. The enzyme catalyses 1-octadecanoyl-2-(9Z-octadecenoyl)-sn-glycero-3-phospho-(1'-sn-glycerol) + N-(acetyl)-sphing-4-enine = 2-(9Z-octadecenoyl)-sn-glycero-3-phospho-(1'-sn-glycerol) + 1-octadecanoyl-N-(acetyl)-sphing-4-enine. It catalyses the reaction a 1,2-diacyl-sn-glycero-3-phospho-(1'-sn-glycerol) + N-(acetyl)-sphing-4-enine = 1-O-acyl-N-(acetyl)-sphing-4-enine + 1-acyl-sn-glycero-3-phospho-(1'-sn-glycerol). The catalysed reaction is 1-octadecanoyl-2-(9Z-octadecenoyl)-sn-glycero-3-phospho-(1'-sn-glycerol) + N-(acetyl)-sphing-4-enine = 1-octadecanoyl-sn-glycero-3-phospho-(1'-sn-glycerol) + 1-(9Z-octadecenoyl)-N-(acetyl)-sphing-4-enine. It carries out the reaction an N-acylethanolamine + a 1,2-diacyl-sn-glycero-3-phosphocholine = 2-(acylamino)ethyl fatty acid + a 2-acyl-sn-glycero-3-phosphocholine. The enzyme catalyses an N-acylethanolamine + a 1,2-diacyl-sn-glycero-3-phosphocholine = 2-(acylamino)ethyl fatty acid + a 1-acyl-sn-glycero-3-phosphocholine. It catalyses the reaction N-(5Z,8Z,11Z,14Z-eicosatetraenoyl)-ethanolamine + 1,2-di-(9Z-octadecenoyl)-sn-glycero-3-phosphocholine = 2-[(5Z,8Z,11Z,14Z)-eicosatetraenoylamino]ethyl (9Z)-octadecenoate + (9Z-octadecenoyl)-sn-glycero-3-phosphocholine. The catalysed reaction is N-(9Z-octadecenoyl) ethanolamine + 1,2-di-(9Z-octadecenoyl)-sn-glycero-3-phosphocholine = 2-[(9Z)-octadecenoylamino]ethyl (9Z)-octadecenoate + (9Z-octadecenoyl)-sn-glycero-3-phosphocholine. It carries out the reaction a 3-acyl-sn-glycerol + a 1,2-diacyl-sn-glycero-3-phosphocholine = a 1,3-diacylglycerol + a 1-acyl-sn-glycero-3-phosphocholine. The enzyme catalyses a 3-acyl-sn-glycerol + a 1,2-diacyl-sn-glycero-3-phosphocholine = a 1,3-diacylglycerol + a 2-acyl-sn-glycero-3-phosphocholine. It catalyses the reaction 3-(9Z-octadecenoyl)-sn-glycerol + 1,2-di-(9Z-octadecenoyl)-sn-glycero-3-phosphocholine = 1,3-di-(9Z-octadecenoyl)-glycerol + (9Z-octadecenoyl)-sn-glycero-3-phosphocholine. The catalysed reaction is 3-hexadecanoyl-sn-glycerol + 1,2-di-(9Z-octadecenoyl)-sn-glycero-3-phosphocholine = 1-(9Z)-octadecenoyl-3-hexadecanoyl-sn-glycerol + (9Z-octadecenoyl)-sn-glycero-3-phosphocholine. It carries out the reaction a 1-acyl-sn-glycerol + a 1,2-diacyl-sn-glycero-3-phosphocholine = a 1,3-diacylglycerol + a 2-acyl-sn-glycero-3-phosphocholine. The enzyme catalyses a 1-acyl-sn-glycerol + a 1,2-diacyl-sn-glycero-3-phosphocholine = a 1,3-diacylglycerol + a 1-acyl-sn-glycero-3-phosphocholine. It catalyses the reaction 1-(9Z-octadecenoyl)-sn-glycerol + 1,2-di-(9Z-octadecenoyl)-sn-glycero-3-phosphocholine = 1,3-di-(9Z-octadecenoyl)-glycerol + (9Z-octadecenoyl)-sn-glycero-3-phosphocholine. The catalysed reaction is 1-hexadecanoyl-sn-glycerol + 1,2-di-(9Z-octadecenoyl)-sn-glycero-3-phosphocholine = 1-hexadecanoyl-3-(9Z)-octadecenoyl-sn-glycerol + (9Z-octadecenoyl)-sn-glycero-3-phosphocholine. It carries out the reaction a 2-acylglycerol + a 1,2-diacyl-sn-glycero-3-phosphocholine = a 1,2-diacylglycerol + a 2-acyl-sn-glycero-3-phosphocholine. The enzyme catalyses a 2-acylglycerol + a 1,2-diacyl-sn-glycero-3-phosphocholine = a 1,2-diacylglycerol + a 1-acyl-sn-glycero-3-phosphocholine. It catalyses the reaction 2-hexadecanoylglycerol + 1,2-di-(9Z-octadecenoyl)-sn-glycero-3-phosphocholine = 1-(9Z)-octadecenoyl-2-hexadecanoylglycerol + (9Z-octadecenoyl)-sn-glycero-3-phosphocholine. The catalysed reaction is 1-O-alkylglycerol + a 1,2-diacyl-sn-glycero-3-phosphocholine = 1-O-alkyl-3-acylglycerol + a 1-acyl-sn-glycero-3-phosphocholine. It carries out the reaction 1-O-alkylglycerol + a 1,2-diacyl-sn-glycero-3-phosphocholine = 1-O-alkyl-3-acylglycerol + a 2-acyl-sn-glycero-3-phosphocholine. The enzyme catalyses 1-O-hexadecylglycerol + 1,2-di-(9Z-octadecenoyl)-sn-glycero-3-phosphocholine = 1-O-hexadecyl-3-(9Z)-octadecenoylglycerol + (9Z-octadecenoyl)-sn-glycero-3-phosphocholine. It catalyses the reaction 1-O-alkyl-2-acyl-sn-glycerol + a 1,2-diacyl-sn-glycero-3-phosphocholine = 1-O-alkyl-2,3-diacyl-sn-glycerol + a 2-acyl-sn-glycero-3-phosphocholine. The catalysed reaction is 1-O-alkyl-2-acyl-sn-glycerol + a 1,2-diacyl-sn-glycero-3-phosphocholine = 1-O-alkyl-2,3-diacyl-sn-glycerol + a 1-acyl-sn-glycero-3-phosphocholine. It carries out the reaction 1-O-hexadecyl-2-acetyl-sn-glycerol + 1,2-di-(9Z-octadecenoyl)-sn-glycero-3-phosphocholine = 1-O-hexadecyl-2-acetyl-3-(9Z)-octadecenoyl-sn-glycerol + (9Z-octadecenoyl)-sn-glycero-3-phosphocholine. The enzyme catalyses 1-O-hexadecyl-2-O-methyl-sn-glycerol + 1,2-di-(9Z-octadecenoyl)-sn-glycero-3-phosphocholine = 1-O-hexadecyl-2-O-methyl-3-(9Z)-octadecenoyl-sn-glycerol + (9Z-octadecenoyl)-sn-glycero-3-phosphocholine. It catalyses the reaction a 1,2-diacyl-sn-glycero-3-phosphoethanolamine + H2O = a 1-acyl-sn-glycero-3-phosphoethanolamine + a fatty acid + H(+). The catalysed reaction is 1-acyl-2-(5Z,8Z,11Z,14Z)-eicosatetraenoyl-sn-glycero-3-phosphoethanolamine + H2O = a 1-acyl-sn-glycero-3-phosphoethanolamine + (5Z,8Z,11Z,14Z)-eicosatetraenoate + H(+). It carries out the reaction a 1,2-diacyl-sn-glycero-3-phospho-(1'-sn-glycerol) + H2O = 1-acyl-sn-glycero-3-phospho-(1'-sn-glycerol) + a fatty acid + H(+). The enzyme catalyses 1-hexadecanoyl-2-(9Z-octadecenoyl)-sn-glycero-3-phospho-(1'-sn-glycerol) + H2O = 1-hexadecanoyl-sn-glycero-3-phospho-(1'-sn-glycerol) + (9Z)-octadecenoate + H(+). It catalyses the reaction a 1,2-diacyl-sn-glycero-3-phospho-(1'-sn-glycerol) + H2O = 2-acyl-sn-glycero-3-phospho-(1'-sn-glycerol) + a fatty acid + H(+). The catalysed reaction is 1-hexadecanoyl-2-(9Z-octadecenoyl)-sn-glycero-3-phospho-(1'-sn-glycerol) + H2O = 2-(9Z-octadecenoyl)-sn-glycero-3-phospho-(1'-sn-glycerol) + hexadecanoate + H(+). In terms of biological role, has dual calcium-independent phospholipase and O-acyltransferase activities with a potential role in glycerophospholipid homeostasis and remodeling of acyl groups of lipophilic alcohols present in acidic cellular compartments. Catalyzes hydrolysis of the ester bond of the fatty acyl group attached at sn-1 or sn-2 position of phospholipids (phospholipase A1 or A2 activity) and transfer it to the hydroxyl group at the first carbon of lipophilic alcohols (O-acyltransferase activity). Among preferred fatty acyl donors are phosphatidylcholines, phosphatidylethanolamines, phosphatidylglycerols and phosphatidylserines. Favors sn-2 over sn-1 deacylation of unsaturated fatty acyl groups of phosphatidylcholines, phosphatidylethanolamines, and phosphatidylglycerols. Among preferred fatty acyl acceptors are natural lipophilic alcohols including short-chain ceramide N-acetyl-sphingosine (C2 ceramide), alkylacylglycerols, monoacylglycerols, and acylethanolamides such as anandamide and oleoylethanolamide. Selectively hydrolyzes the sn-1 fatty acyl group of truncated oxidized phospholipids and may play a role in detoxification of reactive oxidized phospholipids during oxidative stress. Required for normal phospholipid degradation in alveolar macrophages with potential implications in the clearance of pulmonary surfactant, which is mainly composed of dipalmitoylphosphatidylcholine (1,2-dihexadecanoyl-sn-glycero-3-phosphocholine). Involved in the first step of bis(monoacylglycero)phosphate (BMP) de novo synthesis from phosphatidylglycerol (1,2-diacyl-sn-glycero-3-phospho-(1'-sn-glycerol), PG). BMP is an important player in cargo sorting and degradation, regulation of cellular cholesterol levels and intercellular communication. At neutral pH, hydrolyzes the sn-1 fatty acyl group of the lysophosphatidylcholines. The sequence is that of Lysosomal phospholipase A and acyltransferase (PLA2G15) from Canis lupus familiaris (Dog).